We begin with the raw amino-acid sequence, 720 residues long: Inactive serine protease PAMR1 (720 aa).

Residues 1-21 form the signal peptide; it reads MELGWWPQLGLAFLQLLLISS. Intrachain disulfides connect cysteine 128–cysteine 150, cysteine 177–cysteine 199, cysteine 239–cysteine 250, cysteine 244–cysteine 260, cysteine 262–cysteine 271, cysteine 280–cysteine 329, cysteine 315–cysteine 342, and cysteine 414–cysteine 442. A CUB domain is found at 128-236; it reads CGQVLRVPKG…DGFHAIFEEI (109 aa). An EGF-like domain is found at 235 to 272; sequence EITACSSSPCFHDGTCLLDSTGSYKCACLAGYTGKHCE. 2 consecutive Sushi domains span residues 278-344 and 387-444; these read RNCS…ICIK and APTK…SCIP. The region spanning 445–720 is the Peptidase S1 domain; sequence ICGKTENVSA…FKDWIERNMK (276 aa). Asparagine 451 is a glycosylation site (N-linked (GlcNAc...) asparagine). 3 cysteine pairs are disulfide-bonded: cysteine 489-cysteine 505, cysteine 630-cysteine 649, and cysteine 661-cysteine 697.

This sequence belongs to the peptidase S1 family.

It localises to the secreted. Functionally, may play a role in regeneration of skeletal muscle. The polypeptide is Inactive serine protease PAMR1 (PAMR1) (Bos taurus (Bovine)).